A 429-amino-acid chain; its full sequence is 3-phosphoshikimate 1-carboxyvinyltransferase (429 aa).

3 residues coordinate 3-phosphoshikimate: Lys-23, Ser-24, and Arg-28. A phosphoenolpyruvate-binding site is contributed by Lys-23. Residues Gly-94 and Arg-126 each coordinate phosphoenolpyruvate. The 3-phosphoshikimate site is built by Ser-171, Ser-172, Gln-173, Ser-199, Asp-316, Asn-339, and Lys-343. Gln-173 contributes to the phosphoenolpyruvate binding site. Residue Asp-316 is the Proton acceptor of the active site. Phosphoenolpyruvate is bound by residues Arg-347, Arg-389, and Lys-414.

It belongs to the EPSP synthase family. As to quaternary structure, monomer.

Its subcellular location is the cytoplasm. The enzyme catalyses 3-phosphoshikimate + phosphoenolpyruvate = 5-O-(1-carboxyvinyl)-3-phosphoshikimate + phosphate. It participates in metabolic intermediate biosynthesis; chorismate biosynthesis; chorismate from D-erythrose 4-phosphate and phosphoenolpyruvate: step 6/7. Catalyzes the transfer of the enolpyruvyl moiety of phosphoenolpyruvate (PEP) to the 5-hydroxyl of shikimate-3-phosphate (S3P) to produce enolpyruvyl shikimate-3-phosphate and inorganic phosphate. The protein is 3-phosphoshikimate 1-carboxyvinyltransferase of Idiomarina loihiensis (strain ATCC BAA-735 / DSM 15497 / L2-TR).